Here is a 225-residue protein sequence, read N- to C-terminus: MPSRLNVFWLCAAALAALLRCAPAAPVDGAFTDNPAGDTSGEEWETERPADPLIALLKVVLEVIKTHRQEFEAEFHIRYDVLAQYNIPSLPADCPSTNFSMEALLHRLLQGLPVYTALLKYVEKEEPKSQIPSRFRQNSELLKQRITGKMRHAVQVTPLTSSQEQQLLRDLDSSDTFHRKMTAHSILYQLRSFLVDCKNAINKKEKLRESRANRAMTPVTLYYQS.

The N-terminal stretch at 1–24 (MPSRLNVFWLCAAALAALLRCAPA) is a signal peptide. N-linked (GlcNAc...) asparagine glycosylation occurs at Asn98.

This sequence belongs to the IL-6 superfamily. Component of a hexamer of two molecules each of IL6, IL6R and IL6ST; first binds to IL6R to associate with the signaling subunit IL6ST. As to expression, expressed in white muscle, skin, spleen, anterior intestine and stomach. Not expressed in brain, gill, head kidney, posterior intestine and adipose tissue.

It is found in the secreted. Cytokine with a wide variety of biological functions in immunity, tissue regeneration, and metabolism. Binds to IL6R, then the complex associates to the signaling subunit IL6ST/gp130 to trigger the intracellular IL6-signaling pathway. The interaction with the membrane-bound IL6R and IL6ST stimulates 'classic signaling', whereas the binding of IL6 and soluble IL6R to IL6ST stimulates 'trans-signaling'. Alternatively, 'cluster signaling' occurs when membrane-bound IL6:IL6R complexes on transmitter cells activate IL6ST receptors on neighboring receiver cells. The sequence is that of Interleukin-6 (il6) from Sparus aurata (Gilthead sea bream).